The chain runs to 239 residues: Probable transcriptional regulatory protein BPUM_0743 (239 aa).

It belongs to the TACO1 family. YeeN subfamily.

It is found in the cytoplasm. In Bacillus pumilus (strain SAFR-032), this protein is Probable transcriptional regulatory protein BPUM_0743.